The primary structure comprises 21 residues: Peptide PGLa-R2 (21 aa).

Position 21 is a leucine amide (leucine 21).

Expressed by the skin glands.

The protein resides in the secreted. Antimicrobial peptide. The protein is Peptide PGLa-R2 of Xenopus ruwenzoriensis (Uganda clawed frog).